Consider the following 389-residue polypeptide: Acetylornithine deacetylase (389 aa).

Residue His85 coordinates Zn(2+). Asp87 is a catalytic residue. Residue Asp117 participates in Zn(2+) binding. Glu149 is an active-site residue. The Zn(2+) site is built by Glu150, Glu174, and His360.

It belongs to the peptidase M20A family. ArgE subfamily. Homodimer. It depends on Zn(2+) as a cofactor. Co(2+) is required as a cofactor. Glutathione serves as cofactor.

Its subcellular location is the cytoplasm. It catalyses the reaction N(2)-acetyl-L-ornithine + H2O = L-ornithine + acetate. The protein operates within amino-acid biosynthesis; L-arginine biosynthesis; L-ornithine from N(2)-acetyl-L-ornithine (linear): step 1/1. Catalyzes the hydrolysis of the amide bond of N(2)-acetylated L-amino acids. Cleaves the acetyl group from N-acetyl-L-ornithine to form L-ornithine, an intermediate in L-arginine biosynthesis pathway, and a branchpoint in the synthesis of polyamines. The polypeptide is Acetylornithine deacetylase (Yersinia pseudotuberculosis serotype O:1b (strain IP 31758)).